A 220-amino-acid chain; its full sequence is Adenylate kinase (220 aa).

ATP is bound at residue Gly10 to Thr15. Residues Ser30–Val59 form an NMP region. Residues Thr31, Arg36, Lys57 to Val59, Gly85 to Arg88, and Gln92 each bind AMP. The interval Gly122–Asp159 is LID. ATP-binding positions include Arg123 and Thr132–Tyr133. 2 residues coordinate AMP: Arg156 and Arg167. Gly206 serves as a coordination point for ATP.

It belongs to the adenylate kinase family. As to quaternary structure, monomer.

The protein localises to the cytoplasm. The enzyme catalyses AMP + ATP = 2 ADP. Its pathway is purine metabolism; AMP biosynthesis via salvage pathway; AMP from ADP: step 1/1. Catalyzes the reversible transfer of the terminal phosphate group between ATP and AMP. Plays an important role in cellular energy homeostasis and in adenine nucleotide metabolism. In Burkholderia ambifaria (strain ATCC BAA-244 / DSM 16087 / CCUG 44356 / LMG 19182 / AMMD) (Burkholderia cepacia (strain AMMD)), this protein is Adenylate kinase.